Reading from the N-terminus, the 255-residue chain is uncharacterized protein (255 aa).

NADP(+) is bound by residues Ile13, Arg37, Asp55, Asn81, Tyr148, Lys152, Val180, and Thr182. Catalysis depends on Tyr148, which acts as the Proton donor. Lys152 acts as the Lowers pKa of active site Tyr in catalysis.

It belongs to the short-chain dehydrogenases/reductases (SDR) family.

Functionally, involved in osmoadaptation. This is an uncharacterized protein from Emericella nidulans (strain FGSC A4 / ATCC 38163 / CBS 112.46 / NRRL 194 / M139) (Aspergillus nidulans).